Consider the following 123-residue polypeptide: Large ribosomal subunit protein bL12 (123 aa).

The protein belongs to the bacterial ribosomal protein bL12 family. Homodimer. Part of the ribosomal stalk of the 50S ribosomal subunit. Forms a multimeric L10(L12)X complex, where L10 forms an elongated spine to which 2 to 4 L12 dimers bind in a sequential fashion. Binds GTP-bound translation factors.

Its function is as follows. Forms part of the ribosomal stalk which helps the ribosome interact with GTP-bound translation factors. Is thus essential for accurate translation. The sequence is that of Large ribosomal subunit protein bL12 from Rickettsia bellii (strain OSU 85-389).